Consider the following 431-residue polypeptide: Phosphoribosylamine--glycine ligase (431 aa).

The ATP-grasp domain occupies 107 to 315 (RWLMEEYKIP…LVEIGEEIVD (209 aa)). 134–193 (IDDFGRPVVVKPLGLTGGKGVKVVGYQLKDNEEAKAYAEELIKRDGKVLIEERTDGVEFT) is a binding site for ATP. Mg(2+) contacts are provided by Q273, E285, and N287. The Mn(2+) site is built by Q273, E285, and N287.

Belongs to the GARS family. Mg(2+) is required as a cofactor. Requires Mn(2+) as cofactor.

It carries out the reaction 5-phospho-beta-D-ribosylamine + glycine + ATP = N(1)-(5-phospho-beta-D-ribosyl)glycinamide + ADP + phosphate + H(+). Its pathway is purine metabolism; IMP biosynthesis via de novo pathway; N(1)-(5-phospho-D-ribosyl)glycinamide from 5-phospho-alpha-D-ribose 1-diphosphate: step 2/2. In Thermococcus kodakarensis (strain ATCC BAA-918 / JCM 12380 / KOD1) (Pyrococcus kodakaraensis (strain KOD1)), this protein is Phosphoribosylamine--glycine ligase.